The primary structure comprises 337 residues: MTKVFAYAIRKDEEPFLNEWKEAHKDIDVDYTDKLLTPETAKLAKGADGVVVYQQLDYTADTLQALADAGVTKMSLRNVGVDNIDMDKAKELGFQITNVPVYSPNAIAEHAAIQAARVLRQDKRMDEKMAKRDLRWAPTIGREVRDQVVGVVGTGHIGQVFMRIMEGFGAKVIAYDIFKNPELEKKGYYVDSLDDLYKQADVISLHVPDVPANVHMINDKSIAEMKDGVVIVNCSRGRLVDTDAVIRGLDSGKIFGFVMDTYEDEVGVFNKDWEGKEFPDKRLADLIDRPNVLVTPHTAFYTTHAVRNMVVKAFNNNLKLINGEKPDSPVALNKNKF.

NAD(+) is bound by residues 156-157 (HI), aspartate 176, 207-208 (VP), asparagine 213, 234-236 (CSR), and aspartate 260. Residue arginine 236 is part of the active site. Residue glutamate 265 is part of the active site. Histidine 297 (proton donor) is an active-site residue.

This sequence belongs to the D-isomer specific 2-hydroxyacid dehydrogenase family. Homodimer.

It carries out the reaction (R)-lactate + NAD(+) = pyruvate + NADH + H(+). The polypeptide is D-lactate dehydrogenase (Lactobacillus helveticus (Lactobacillus suntoryeus)).